The primary structure comprises 432 residues: G-protein coupled receptor 22 (432 aa).

Residues 1–45 lie on the Cytoplasmic side of the membrane; the sequence is MCFSPVLEINMQSESNVTVRDDIEDIDTNMYQPLSYPLSFQVSLT. A helical membrane pass occupies residues 46–66; the sequence is GFLMLEIVLGLGSNLTVLVLY. Residues 67 to 85 are Extracellular-facing; the sequence is CMKSNLISSVSNIITMNLH. Residues 86-106 form a helical membrane-spanning segment; it reads VLDVIICVGCIPLTIVILLLS. Topologically, residues 107–115 are cytoplasmic; that stretch reads LERNTALIC. Residues 116–136 traverse the membrane as a helical segment; the sequence is CFHEACVSFASVSTAINVFAI. The Extracellular portion of the chain corresponds to 137–156; that stretch reads TLDRYDISVKPANRILTMGR. A helical transmembrane segment spans residues 157–177; sequence AVMLMTSIWIFSFFSFLIPFI. At 178-208 the chain is on the cytoplasmic side; sequence EVNFFSLQSGNAWENKTLLCVSTSEYYTELG. Residues 209–229 traverse the membrane as a helical segment; the sequence is MYYHLLVQIPIFFFTVIVMLI. Residues 230–314 lie on the Extracellular side of the membrane; that stretch reads TYTKILQALN…ERQKRVFKMS (85 aa). Residues 315-335 traverse the membrane as a helical segment; that stretch reads LLIISTFLLCWTPISVLNTTI. The Cytoplasmic portion of the chain corresponds to 336 to 348; it reads LCLGPSDLLVKLR. Residues 349–369 traverse the membrane as a helical segment; that stretch reads LCFLVMAYGTTIFHPLLYAFT. Residues 370-432 lie on the Extracellular side of the membrane; it reads RQKFQKVLKS…KCLVPQVVTD (63 aa).

Belongs to the G-protein coupled receptor 1 family. Abundant levels detected in the brain. High expression in the heart (at protein level). No detectable expression in other peripheral tissues.

It localises to the cell membrane. Functionally, orphan G-protein coupled receptor. Seems to act through a G(i)/G(o) mediated pathway. May be involved in ciliogenesis. This chain is G-protein coupled receptor 22, found in Rattus norvegicus (Rat).